The sequence spans 240 residues: T4 protein (240 aa).

The protein belongs to the poxviruses B9 family.

This chain is T4 protein, found in Sheeppox virus (strain KS-1) (SPPV).